The primary structure comprises 310 residues: N-acetylmuramic acid 6-phosphate etherase (310 aa).

Positions 64 to 227 (ITSRLKSNGR…STSVMIKLGK (164 aa)) constitute an SIS domain. E92 acts as the Proton donor in catalysis. E123 is an active-site residue.

Belongs to the GCKR-like family. MurNAc-6-P etherase subfamily. As to quaternary structure, homodimer.

The enzyme catalyses N-acetyl-D-muramate 6-phosphate + H2O = N-acetyl-D-glucosamine 6-phosphate + (R)-lactate. The protein operates within amino-sugar metabolism; N-acetylmuramate degradation. Specifically catalyzes the cleavage of the D-lactyl ether substituent of MurNAc 6-phosphate, producing GlcNAc 6-phosphate and D-lactate. The protein is N-acetylmuramic acid 6-phosphate etherase of Prochlorococcus marinus (strain NATL2A).